The sequence spans 452 residues: Gastrin/cholecystokinin type B receptor (452 aa).

Residues 1-57 (MELLKLNRSLPGPGPGAALCRPEGPLLNGSGAGNLSCEPPRIRGAGTRELELAVRIT) lie on the Extracellular side of the membrane. N-linked (GlcNAc...) asparagine glycans are attached at residues asparagine 7, asparagine 28, and asparagine 34. Residues 58-78 (LYAAIFLMSVAGNVLIIVVLG) traverse the membrane as a helical segment. Over 79–99 (LSRRLRTVTNAFLLSLAVSDL) the chain is Cytoplasmic. A helical membrane pass occupies residues 100 to 120 (LLAVACMPFTLLPNLMGTFIF). Residues 121-127 (GTVVCKA) lie on the Extracellular side of the membrane. A disulfide bond links cysteine 125 and cysteine 203. Residues 128–148 (VSYFMGVSVSVSTLSLVAIAL) traverse the membrane as a helical segment. Topologically, residues 149 to 171 (ERYSAICRPLQARVWQTRSHAAR) are cytoplasmic. A helical transmembrane segment spans residues 172-192 (VIVATWMLSGLLMVPYPVYTA). The Extracellular portion of the chain corresponds to 193–218 (VQPAGPRVLQCMHRWPSARIRQTWSV). The helical transmembrane segment at 219–239 (LLLLLLFFVPGVVMAVAYGLI) threads the bilayer. The Cytoplasmic portion of the chain corresponds to 240–339 (SRELYLGLRF…LLAKKRVVRM (100 aa)). The interval 256–285 (ESQSQVGSQGGLPGGAGQGPAHPNGHCRSE) is disordered. Positions 263-273 (SQGGLPGGAGQ) are enriched in gly residues. A helical membrane pass occupies residues 340–360 (LLVIVVLFFLCWLPVYSANTW). Over 361–376 (RAFDGPGAHRALSGAP) the chain is Extracellular. The chain crosses the membrane as a helical span at residues 377 to 397 (ISFIHLLSYASACVNPLVYCF). Residues 398–452 (MHRRFRQACLDTCARCCPRPPRARPRPLPDEDPPTPSIASLSRLSYTTISTLGPG) are Cytoplasmic-facing. Cysteine 413 carries the S-palmitoyl cysteine lipid modification.

It belongs to the G-protein coupled receptor 1 family.

The protein localises to the cell membrane. Functionally, receptor for gastrin and cholecystokinin. The CCK-B receptors occur throughout the central nervous system where they modulate anxiety, analgesia, arousal, and neuroleptic activity. This receptor mediates its action by association with G proteins that activate a phosphatidylinositol-calcium second messenger system. The protein is Gastrin/cholecystokinin type B receptor of Sus scrofa (Pig).